Consider the following 48-residue polypeptide: uncharacterized protein (48 aa).

The interval 1-30 (MLGRTKLGNRNAQANNNAKKKNGFQTHFDS) is disordered.

This is an uncharacterized protein from Bacillus subtilis (strain 168).